We begin with the raw amino-acid sequence, 615 residues long: DNA mismatch repair protein MutL (615 aa).

Positions 363 to 397 are disordered; it reads FAEPAAREPVAPRYTPAPASGSRPAAPWPNAQPGY. The segment covering 364–391 has biased composition (low complexity); sequence AEPAAREPVAPRYTPAPASGSRPAAPWP.

The protein belongs to the DNA mismatch repair MutL/HexB family.

This protein is involved in the repair of mismatches in DNA. It is required for dam-dependent methyl-directed DNA mismatch repair. May act as a 'molecular matchmaker', a protein that promotes the formation of a stable complex between two or more DNA-binding proteins in an ATP-dependent manner without itself being part of a final effector complex. The chain is DNA mismatch repair protein MutL from Escherichia coli O8 (strain IAI1).